A 103-amino-acid chain; its full sequence is Large ribosomal subunit protein bL21 (103 aa).

It belongs to the bacterial ribosomal protein bL21 family. In terms of assembly, part of the 50S ribosomal subunit. Contacts protein L20.

This protein binds to 23S rRNA in the presence of protein L20. The protein is Large ribosomal subunit protein bL21 of Acinetobacter baumannii (strain AB307-0294).